Consider the following 294-residue polypeptide: Glycine--tRNA ligase alpha subunit (294 aa).

Belongs to the class-II aminoacyl-tRNA synthetase family. Tetramer of two alpha and two beta subunits.

Its subcellular location is the cytoplasm. The enzyme catalyses tRNA(Gly) + glycine + ATP = glycyl-tRNA(Gly) + AMP + diphosphate. The chain is Glycine--tRNA ligase alpha subunit from Oleidesulfovibrio alaskensis (strain ATCC BAA-1058 / DSM 17464 / G20) (Desulfovibrio alaskensis).